Reading from the N-terminus, the 422-residue chain is Glycine amidinotransferase, mitochondrial (422 aa).

Catalysis depends on residues D253 and H302. C406 serves as the catalytic Amidino-cysteine intermediate.

This sequence belongs to the amidinotransferase family. Homodimer. Strongly expressed in neurons and glia of the brain, the lamina propria, submucosa and serosa of the small intestine, in oocytes and on the fringes of the pancreas. Not expressed in the retina, eye lens, heart or bulbus arteriosus. Expressed in the yolk syncytial layer in gastrula stage embryos, in the yolk syncytial layer and mature somites in early segmentation embryos and in the yolk syncytial layer and the liver of long-pec stage (48 hours post-fertilization) embryos.

The protein resides in the mitochondrion inner membrane. It catalyses the reaction L-arginine + glycine = guanidinoacetate + L-ornithine. The protein operates within amine and polyamine biosynthesis; creatine biosynthesis; creatine from L-arginine and glycine: step 1/2. Functionally, catalyzes the biosynthesis of guanidinoacetate, the immediate precursor of creatine. Creatine plays a vital role in energy metabolism in muscle tissues. May play a role in embryonic and central nervous system development. The sequence is that of Glycine amidinotransferase, mitochondrial from Danio rerio (Zebrafish).